Reading from the N-terminus, the 131-residue chain is Arsenate reductase 2 (131 aa).

Residues cysteine 10, cysteine 82, and cysteine 89 each act as nucleophile in the active site. Intrachain disulfides connect cysteine 10/cysteine 82 and cysteine 82/cysteine 89.

The protein belongs to the low molecular weight phosphotyrosine protein phosphatase family. Thioredoxin-coupled ArsC subfamily.

It is found in the cytoplasm. It carries out the reaction arsenate + [thioredoxin]-dithiol + H(+) = arsenite + [thioredoxin]-disulfide + H2O. Functionally, catalyzes the reduction of arsenate [As(V)] to arsenite [As(III)]. The sequence is that of Arsenate reductase 2 from Staphylococcus epidermidis (strain ATCC 35984 / DSM 28319 / BCRC 17069 / CCUG 31568 / BM 3577 / RP62A).